Reading from the N-terminus, the 268-residue chain is Octanoyltransferase (268 aa).

The BPL/LPL catalytic domain occupies 73–261 (GEADELVWLL…AFEEVFGPAV (189 aa)). Residues 112 to 119 (RGGEYTYH), 192 to 194 (ALG), and 205 to 207 (GLS) contribute to the substrate site. The active-site Acyl-thioester intermediate is C223.

The protein belongs to the LipB family.

It is found in the cytoplasm. It carries out the reaction octanoyl-[ACP] + L-lysyl-[protein] = N(6)-octanoyl-L-lysyl-[protein] + holo-[ACP] + H(+). It functions in the pathway protein modification; protein lipoylation via endogenous pathway; protein N(6)-(lipoyl)lysine from octanoyl-[acyl-carrier-protein]: step 1/2. In terms of biological role, catalyzes the transfer of endogenously produced octanoic acid from octanoyl-acyl-carrier-protein onto the lipoyl domains of lipoate-dependent enzymes. Lipoyl-ACP can also act as a substrate although octanoyl-ACP is likely to be the physiological substrate. The polypeptide is Octanoyltransferase (Agrobacterium fabrum (strain C58 / ATCC 33970) (Agrobacterium tumefaciens (strain C58))).